Reading from the N-terminus, the 415-residue chain is Sucrose permease (415 aa).

Over 1–16 (MALNIPFRNAYYRFAS) the chain is Cytoplasmic. A helical membrane pass occupies residues 17–37 (SYSFLFFISWSLWWSLYAIWL). The Periplasmic segment spans residues 38–48 (KGHLGLTGTEL). The chain crosses the membrane as a helical span at residues 49-69 (GTLYSVNQFTSILFMMFYGIV). The Cytoplasmic segment spans residues 70 to 77 (QDKLGLKK). A helical transmembrane segment spans residues 78–98 (PLIWCMSFILVLTGPFMIYVY). At 99-107 (EPLLQSNFS) the chain is on the periplasmic side. The helical transmembrane segment at 108 to 128 (VGLILGALFFGLGYLAGCGLL) threads the bilayer. Over 129–147 (DSFTEKMARNFHFEYGTAR) the chain is Cytoplasmic. Residues 148–167 (AWGSFGYAIGAFFAGIFFSI) traverse the membrane as a helical segment. At 168–170 (SPH) the chain is on the periplasmic side. A helical membrane pass occupies residues 171 to 190 (INFWLVSLFGAVFMMINMRF). Residues 191–220 (KDKDHQCIAADAGGVKKEDFIAVFKDRNFW) are Cytoplasmic-facing. Residues 221 to 241 (VFVIFIVGTWSFYNIFDQQLF) traverse the membrane as a helical segment. Residues 242–260 (PVFYAGLFESHDVGTRLYG) lie on the Periplasmic side of the membrane. Residues 261 to 281 (YLNSFQVVLEALCMAIIPFFV) traverse the membrane as a helical segment. The Cytoplasmic portion of the chain corresponds to 282–287 (NRVGPK). A helical transmembrane segment spans residues 288–308 (NALLIGVVIMALRILSCALFV). Over 309-311 (NPW) the chain is Periplasmic. The chain crosses the membrane as a helical span at residues 312–332 (IISLVKLLHAIEVPLCVISVF). At 333–342 (KYSVANFDKR) the chain is on the cytoplasmic side. A helical transmembrane segment spans residues 343 to 363 (LSSTIFLIGFQIASSLGIVLL). Topologically, residues 364 to 377 (STPTGILFDHAGYQ) are periplasmic. Residues 378 to 398 (TVFFAISGIVCLMLLFGIFFL) traverse the membrane as a helical segment. The Cytoplasmic segment spans residues 399–415 (SKKREQIVMETPVPSAI).

It belongs to the major facilitator superfamily. Oligosaccharide:H(+) symporter (OHS) (TC 2.A.1.5) family.

The protein resides in the cell inner membrane. It functions in the pathway glycan biosynthesis; sucrose metabolism. Its function is as follows. Responsible for transport of sucrose into the cell, with the concomitant import of a proton (symport system). Can also transport maltose, fructose or lactulose, but not glucose, lactose or melibiose. The substrate specificity is directed toward the fructofuranosyl moiety of the substrate. The polypeptide is Sucrose permease (Escherichia coli).